Reading from the N-terminus, the 371-residue chain is GTPase Obg (371 aa).

The region spanning 1-159 is the Obg domain; it reads MKFVDEAYID…KNLKLELKVL (159 aa). The region spanning 160–334 is the OBG-type G domain; it reads ADVGLLGMPN…LIRTIYKHVH (175 aa). Residues 166–173, 191–195, 213–216, 284–287, and 315–317 contribute to the GTP site; these read GMPNAGKS, FTTLH, DIPG, NKLD, and SAL. Mg(2+)-binding residues include Ser173 and Thr193.

Belongs to the TRAFAC class OBG-HflX-like GTPase superfamily. OBG GTPase family. Monomer. The cofactor is Mg(2+).

The protein resides in the cytoplasm. Functionally, an essential GTPase which binds GTP, GDP and possibly (p)ppGpp with moderate affinity, with high nucleotide exchange rates and a fairly low GTP hydrolysis rate. Plays a role in control of the cell cycle, stress response, ribosome biogenesis and in those bacteria that undergo differentiation, in morphogenesis control. The polypeptide is GTPase Obg (Delftia acidovorans (strain DSM 14801 / SPH-1)).